The sequence spans 233 residues: MSLLHQARFFITVNHLRDLPATAVPEVAFAGRSNAGKSTAINILCNQKRLAFSSKTPGRTQHINYFSVMPAKAEDPLGFLVDLPGYGYAEAPGETKSHWVHLLGDYVKARQQLAGLVIMMDARRPFTDLDCQMVEWFLPTGKPIHVLLTKADKLTNNDASRALMAARKVLADYRAQIDGDVSLTVQLFSSLKRRGIEEAQRIVAGWLCLPEALEAEPQAEPAKKTPSPNAQRG.

An EngB-type G domain is found at 23 to 209 (AVPEVAFAGR…QRIVAGWLCL (187 aa)). GTP-binding positions include 31-38 (GRSNAGKS), 58-62 (GRTQH), 82-85 (DLPG), 149-152 (TKAD), and 188-190 (FSS). Mg(2+) is bound by residues Ser38 and Thr60.

It belongs to the TRAFAC class TrmE-Era-EngA-EngB-Septin-like GTPase superfamily. EngB GTPase family. Requires Mg(2+) as cofactor.

Necessary for normal cell division and for the maintenance of normal septation. In Ralstonia pickettii (strain 12J), this protein is Probable GTP-binding protein EngB.